The primary structure comprises 112 residues: FK506-binding protein 1 (112 aa).

Residues 1–10 show a composition bias toward polar residues; it reads MSAPATTQVE. Positions 1-20 are disordered; sequence MSAPATTQVEILQEGDGKTF. The PPIase FKBP-type domain occupies 24 to 112; the sequence is GDLVTIHYTG…LFDVELLNVN (89 aa).

This sequence belongs to the FKBP-type PPIase family. FKBP1 subfamily.

The protein localises to the cytoplasm. It carries out the reaction [protein]-peptidylproline (omega=180) = [protein]-peptidylproline (omega=0). With respect to regulation, inhibited by both FK506 and rapamycin. PPIases accelerate the folding of proteins. It catalyzes the cis-trans isomerization of proline imidic peptide bonds in oligopeptides. The polypeptide is FK506-binding protein 1 (FPR1) (Debaryomyces hansenii (strain ATCC 36239 / CBS 767 / BCRC 21394 / JCM 1990 / NBRC 0083 / IGC 2968) (Yeast)).